We begin with the raw amino-acid sequence, 423 residues long: Tumor necrosis factor receptor superfamily member 19 (423 aa).

A signal peptide spans M1 to C29. Over E30–L170 the chain is Extracellular. 3 TNFR-Cys repeats span residues D33–C72, T74–C114, and D116–C149. 8 disulfides stabilise this stretch: C34–C46, C49–C62, C52–C72, C75–C89, C92–C106, C95–C114, C117–C135, and C138–C149. A glycan (N-linked (GlcNAc...) asparagine) is linked at N105. A helical transmembrane segment spans residues A171–I191. The Cytoplasmic segment spans residues Y192 to L423.

In terms of assembly, associates with TRAF1, TRAF2, TRAF3 and TRAF5. Interacts with LINGO1. Highly expressed in prostate. Detected at lower levels in thymus, spleen, testis, uterus, small intestine, colon and peripheral blood leukocytes.

Its subcellular location is the membrane. Its function is as follows. Can mediate activation of JNK and NF-kappa-B. May promote caspase-independent cell death. The polypeptide is Tumor necrosis factor receptor superfamily member 19 (TNFRSF19) (Homo sapiens (Human)).